Reading from the N-terminus, the 305-residue chain is Leucine-rich repeat-containing protein 25 (305 aa).

Residues 1-20 form the signal peptide; it reads MGGTLAWTLLLPLLLRESDS. The Extracellular portion of the chain corresponds to 21–165; the sequence is LEPSCTVSSA…SCAPGLASAT (145 aa). LRR repeat units follow at residues 39–59, 62–83, and 86–107; these read SATCLNFSGLSLSLPHNQSLR, NVILLDLSGNGLRELPVTFFAH, and KLEVLNVLRNPLSRVDGALAAR. N-linked (GlcNAc...) asparagine glycosylation is found at Asn-44 and Asn-55. N-linked (GlcNAc...) asparagine glycosylation is found at Asn-130 and Asn-148. A helical transmembrane segment spans residues 166–186; sequence IGAVVVSGCLLLGLAIAGPVL. The Cytoplasmic segment spans residues 187-305; the sequence is AWRLWRCRVA…DEEEYVIPGH (119 aa). A disordered region spans residues 204 to 229; it reads PWAAQDGPKPGLGLQPRYGSRSAPKP. Residue Tyr-284 is modified to Phosphotyrosine.

Interacts with RIGI. Interacts with SQSTM1. Interacts with p65/RELA; this interaction promotes the degradation of RELA through autophagy. Expressed in plasmacytoid dendritic cells (PDC), monocyte-derived dendritic cells (MDDC), granulocytes, monocytes, B-lymphocytes, peripheral blood leukocytes, spleen, bone marrow, and, to a lesser extent, lymph nodes, fetal liver, and appendix but not in thymus.

It is found in the membrane. It localises to the cytoplasm. In terms of biological role, plays a role in the inhibition of RLR-mediated type I interferon signaling pathway by targeting RIGI for autophagic degradation. Interacts specifically with ISG15-associated RIGI to promote interaction between RIGI and the autophagic cargo receptor p62/SQSTM1 to mediate RIGI degradation via selective autophagy. Also plays a role in the inhibition of NF-kappa-B signaling pathway and inflammatory response by promoting the degradation of p65/RELA. The protein is Leucine-rich repeat-containing protein 25 (LRRC25) of Homo sapiens (Human).